We begin with the raw amino-acid sequence, 258 residues long: tRNA pseudouridine synthase A (258 aa).

Catalysis depends on Asp-52, which acts as the Nucleophile. Tyr-110 serves as a coordination point for substrate.

The protein belongs to the tRNA pseudouridine synthase TruA family. In terms of assembly, homodimer.

It catalyses the reaction uridine(38/39/40) in tRNA = pseudouridine(38/39/40) in tRNA. In terms of biological role, formation of pseudouridine at positions 38, 39 and 40 in the anticodon stem and loop of transfer RNAs. The protein is tRNA pseudouridine synthase A of Francisella philomiragia subsp. philomiragia (strain ATCC 25017 / CCUG 19701 / FSC 153 / O#319-036).